The primary structure comprises 313 residues: Probable cell division protein WhiA (313 aa).

The H-T-H motif DNA-binding region spans 275–308; sequence SLRELGELAQPPLSKSCVNHRLRKLEQIAEHILA.

This sequence belongs to the WhiA family.

Its function is as follows. Involved in cell division and chromosome segregation. The chain is Probable cell division protein WhiA from Desulforudis audaxviator (strain MP104C).